Here is a 124-residue protein sequence, read N- to C-terminus: Protein MGF 110-4L-B (124 aa).

A signal peptide spans 1 to 18; it reads MLVIFLGILGLLANQVLG. N-linked (GlcNAc...) asparagine; by host glycosylation occurs at N64. Residues 121 to 124 carry the Prevents secretion from ER motif; sequence KEDL.

The protein belongs to the asfivirus MGF 110 family.

It is found in the virion. Its subcellular location is the host endoplasmic reticulum-Golgi intermediate compartment. In terms of biological role, causes the redistribution of lumenal ER protein to an enlarged ERGIC compartment. This chain is Protein MGF 110-4L-B, found in African swine fever virus (isolate Portugal/Lis 57/1957) (ASFV).